The primary structure comprises 130 residues: Protein ApaG (130 aa).

An ApaG domain is found at 3 to 127; the sequence is EHESCGVRIS…FSLDRPSDRL (125 aa).

The sequence is that of Protein ApaG from Maricaulis maris (strain MCS10) (Caulobacter maris).